Here is a 58-residue protein sequence, read N- to C-terminus: UPF0391 membrane protein Gbem_0127 (58 aa).

2 consecutive transmembrane segments (helical) span residues 4-24 (WALI…GGIA) and 33-53 (ILFY…LLAG).

This sequence belongs to the UPF0391 family.

It localises to the cell membrane. The polypeptide is UPF0391 membrane protein Gbem_0127 (Citrifermentans bemidjiense (strain ATCC BAA-1014 / DSM 16622 / JCM 12645 / Bem) (Geobacter bemidjiensis)).